The chain runs to 233 residues: 5'-methylthioadenosine/S-adenosylhomocysteine nucleosidase (233 aa).

E12 (proton acceptor) is an active-site residue. Residues G78, I156, and 177–178 contribute to the substrate site; that span reads ME. The Proton donor role is filled by D201.

This sequence belongs to the PNP/UDP phosphorylase family. MtnN subfamily.

It catalyses the reaction S-adenosyl-L-homocysteine + H2O = S-(5-deoxy-D-ribos-5-yl)-L-homocysteine + adenine. It carries out the reaction S-methyl-5'-thioadenosine + H2O = 5-(methylsulfanyl)-D-ribose + adenine. The catalysed reaction is 5'-deoxyadenosine + H2O = 5-deoxy-D-ribose + adenine. The protein operates within amino-acid biosynthesis; L-methionine biosynthesis via salvage pathway; S-methyl-5-thio-alpha-D-ribose 1-phosphate from S-methyl-5'-thioadenosine (hydrolase route): step 1/2. Functionally, catalyzes the irreversible cleavage of the glycosidic bond in both 5'-methylthioadenosine (MTA) and S-adenosylhomocysteine (SAH/AdoHcy) to adenine and the corresponding thioribose, 5'-methylthioribose and S-ribosylhomocysteine, respectively. Also cleaves 5'-deoxyadenosine, a toxic by-product of radical S-adenosylmethionine (SAM) enzymes, into 5-deoxyribose and adenine. The sequence is that of 5'-methylthioadenosine/S-adenosylhomocysteine nucleosidase from Listeria monocytogenes serotype 4b (strain F2365).